A 311-amino-acid polypeptide reads, in one-letter code: tRNA dimethylallyltransferase (311 aa).

Position 16–23 (16–23) interacts with ATP; the sequence is GPTASGKS. 18–23 is a binding site for substrate; it reads TASGKS. The segment at 41 to 44 is interaction with substrate tRNA; the sequence is DSMQ.

It belongs to the IPP transferase family. As to quaternary structure, monomer. Requires Mg(2+) as cofactor.

It catalyses the reaction adenosine(37) in tRNA + dimethylallyl diphosphate = N(6)-dimethylallyladenosine(37) in tRNA + diphosphate. Functionally, catalyzes the transfer of a dimethylallyl group onto the adenine at position 37 in tRNAs that read codons beginning with uridine, leading to the formation of N6-(dimethylallyl)adenosine (i(6)A). This chain is tRNA dimethylallyltransferase, found in Geobacter sulfurreducens (strain ATCC 51573 / DSM 12127 / PCA).